A 370-amino-acid polypeptide reads, in one-letter code: MRVLAAMSGGVDSAVAAARAVAAGHDVVGVHLALSTAPGALRTGSRGCCSKEDAGDARRAADVLGIPFYVWDFADRFKEDVIDDFVASYAAGETPNPCLRCNEKIKFTALADRAVALGFDAVATGHYARLEDGVLRRAVDADKDQSYVLGVLTADQLSRAMFPIGDTPKEQIREEAAERGLAVANKPDSHDICFIPTGDTRAFLGARIGVRPGSVVDADSGEVLAAHDGVHGFTIGQRKGLGVEGPAGDGRPRYVTAIEPETGTVRVGSAKNLDVWAISAQRAIWTSGQAPEGPVECMVQVRAHGGLAQAVAEAVDDGTSGGGISISLREPLTGVAKGQAVVLYRPDSELGDQVLGSGTISGTESEPNTL.

ATP is bound by residues 6-13 and Leu32; that span reads AMSGGVDS. Cys101 (nucleophile) is an active-site residue. A disulfide bridge links Cys101 with Cys193. Gly125 is an ATP binding site. Residues 143-145 are interaction with tRNA; the sequence is KDQ. The active-site Cysteine persulfide intermediate is Cys193.

The protein belongs to the MnmA/TRMU family.

Its subcellular location is the cytoplasm. The catalysed reaction is S-sulfanyl-L-cysteinyl-[protein] + uridine(34) in tRNA + AH2 + ATP = 2-thiouridine(34) in tRNA + L-cysteinyl-[protein] + A + AMP + diphosphate + H(+). Functionally, catalyzes the 2-thiolation of uridine at the wobble position (U34) of tRNA, leading to the formation of s(2)U34. This is tRNA-specific 2-thiouridylase MnmA from Rhodococcus erythropolis (strain PR4 / NBRC 100887).